Reading from the N-terminus, the 955-residue chain is Serine-aspartate repeat-containing protein C (955 aa).

Residues 1 to 50 form the signal peptide; that stretch reads MNNKKTVTNRKGMIPNRLNKFSIRKYSVGTASILVGTTLIFGLSGHEAKA. The segment at 51–166 is disordered; sequence AEHTNGELNQ…TPKTTTIKPR (116 aa). Residues 51 to 495 are ligand binding A region; sequence AEHTNGELNQ…GSSTANGDQK (445 aa). Over residues 56–71 the composition is skewed to polar residues; it reads GELNQSKNETTAPSEN. Residues 72–83 are compositionally biased toward basic and acidic residues; the sequence is KTTEKVDSHQLK. The segment covering 84–114 has biased composition (polar residues); it reads DNTQTATADQPKVTMSDSATFKETSSNMQSP. The span at 115–132 shows a compositional bias: low complexity; the sequence is QNATASQSTTQTSNVTTN. The span at 133-164 shows a compositional bias: polar residues; the sequence is DKSSTTYSNETDKSNLTQAKDVSATPKTTTIK. 2 CNA-B domains span residues 496–606 and 607–717; these read KYNL…YKTP and KYSL…EEET. The disordered stretch occupies residues 678-935; sequence TQTGTNTTED…NNSNNGTLFG (258 aa). 2 stretches are compositionally biased toward acidic residues: residues 685–695 and 712–894; these read TEDDKDADGGE and YYEE…DSDS. The short motif at 918–922 is the LPXTG sorting signal element; it reads LPETG. A compositionally biased stretch (low complexity) spans 920–935; it reads ETGSENNNSNNGTLFG. At threonine 921 the chain carries Pentaglycyl murein peptidoglycan amidated threonine. A propeptide spans 922-955 (removed by sortase); that stretch reads GSENNNSNNGTLFGGLFAALGSLLLFGRRKKQNK.

It belongs to the serine-aspartate repeat-containing protein (SDr) family. As to quaternary structure, homodimerizes; via N2-Domain. Interacts with host NRXN1; this interaction mediates bacterial attachment to host cells.

Its subcellular location is the secreted. It is found in the cell wall. Functionally, cell surface-associated calcium-binding protein which plays an important role in adhesion and pathogenesis. Mediates interactions with components of the extracellular matrix such as host NRXN1 to promote bacterial adhesion. This is Serine-aspartate repeat-containing protein C (sdrC) from Staphylococcus aureus (strain MW2).